Reading from the N-terminus, the 67-residue chain is MFTLKKSLLLIFFLGTINLSLCEEERNADEEERRDDPEERDVEVEKRFLSLALAALPKFLCLVFKKC.

Residues 1-22 (MFTLKKSLLLIFFLGTINLSLC) form the signal peptide. Positions 23–45 (EEERNADEEERRDDPEERDVEVE) are excised as a propeptide. A disulfide bond links Cys-61 and Cys-67.

Belongs to the frog skin active peptide (FSAP) family. Brevinin subfamily. As to expression, expressed by the skin glands.

It is found in the secreted. Functionally, antimicrobial peptide. This is Brevinin-1CDYc from Rana huanrensis (Huanren frog).